The primary structure comprises 787 residues: GPI ethanolamine phosphate transferase 2 (787 aa).

3 N-linked (GlcNAc...) asparagine glycosylation sites follow: Asn33, Asn185, and Asn397. 3 helical membrane-spanning segments follow: residues 400 to 420 (FLTYGTTLMIIGTLIVTVWNF), 426 to 446 (YIEHVGTSVLLGISMFASSFI), and 455 to 475 (WITISVLLLMQISNGKKLVVL). The N-linked (GlcNAc...) asparagine glycan is linked to Asn485. 2 helical membrane passes run 504-524 (HTSVLWWLNVVTFLSVGFPFL) and 536-556 (LLSVSFLALSSITYKICFAIV). An N-linked (GlcNAc...) asparagine glycan is attached at Asn581. Residues 591 to 611 (LVPIARIFFQICGVSIIILLF) traverse the membrane as a helical segment. Asn617 is a glycosylation site (N-linked (GlcNAc...) asparagine). Residues 629-651 (VIKFVLLLQTSSANIPLFLIFEI) traverse the membrane as a helical segment. Asn669 carries N-linked (GlcNAc...) asparagine glycosylation. The next 4 membrane-spanning stretches (helical) occupy residues 671-693 (TFFQFGGTNSIATVNLTNAYNGV), 699-719 (IYVVGVLMFLSNYAPSIYWAL), 740-760 (GTCLMIACIALRYHLFIWSVF), and 767-787 (YAAWSLYNVVMDFAITLLGVL).

Belongs to the PIGG/PIGN/PIGO family. PIGG subfamily.

It is found in the endoplasmic reticulum membrane. Its pathway is glycolipid biosynthesis; glycosylphosphatidylinositol-anchor biosynthesis. In terms of biological role, ethanolamine phosphate transferase involved in glycosylphosphatidylinositol-anchor biosynthesis. Transfers ethanolamine phosphate to the GPI second mannose. This is GPI ethanolamine phosphate transferase 2 (LAS21) from Kluyveromyces lactis (strain ATCC 8585 / CBS 2359 / DSM 70799 / NBRC 1267 / NRRL Y-1140 / WM37) (Yeast).